A 329-amino-acid chain; its full sequence is DNA-directed RNA polymerase subunit alpha (329 aa).

Residues 1–232 (MQEMLEQLLT…YQLIAFVDLK (232 aa)) form an alpha N-terminal domain (alpha-NTD) region. An alpha C-terminal domain (alpha-CTD) region spans residues 246–329 (FDPIFLQPVD…PSSLVSKESA (84 aa)).

It belongs to the RNA polymerase alpha chain family. Homodimer. The RNAP catalytic core consists of 2 alpha, 1 beta, 1 beta' and 1 omega subunit. When a sigma factor is associated with the core the holoenzyme is formed, which can initiate transcription.

The enzyme catalyses RNA(n) + a ribonucleoside 5'-triphosphate = RNA(n+1) + diphosphate. In terms of biological role, DNA-dependent RNA polymerase catalyzes the transcription of DNA into RNA using the four ribonucleoside triphosphates as substrates. The sequence is that of DNA-directed RNA polymerase subunit alpha from Hydrogenovibrio crunogenus (strain DSM 25203 / XCL-2) (Thiomicrospira crunogena).